The chain runs to 343 residues: Probable dual-specificity RNA methyltransferase RlmN (343 aa).

Glu-90 functions as the Proton acceptor in the catalytic mechanism. In terms of domain architecture, Radical SAM core spans 96–325; sequence HEGYATACIS…AEIRYEKGAD (230 aa). A disulfide bridge connects residues Cys-103 and Cys-330. Residues Cys-110, Cys-114, and Cys-117 each coordinate [4Fe-4S] cluster. S-adenosyl-L-methionine is bound by residues 157–158, Ser-189, 212–214, and Asn-288; these read GE and SLH. Cys-330 (S-methylcysteine intermediate) is an active-site residue.

Belongs to the radical SAM superfamily. RlmN family. [4Fe-4S] cluster serves as cofactor.

Its subcellular location is the cytoplasm. The enzyme catalyses adenosine(2503) in 23S rRNA + 2 reduced [2Fe-2S]-[ferredoxin] + 2 S-adenosyl-L-methionine = 2-methyladenosine(2503) in 23S rRNA + 5'-deoxyadenosine + L-methionine + 2 oxidized [2Fe-2S]-[ferredoxin] + S-adenosyl-L-homocysteine. It catalyses the reaction adenosine(37) in tRNA + 2 reduced [2Fe-2S]-[ferredoxin] + 2 S-adenosyl-L-methionine = 2-methyladenosine(37) in tRNA + 5'-deoxyadenosine + L-methionine + 2 oxidized [2Fe-2S]-[ferredoxin] + S-adenosyl-L-homocysteine. Specifically methylates position 2 of adenine 2503 in 23S rRNA and position 2 of adenine 37 in tRNAs. The polypeptide is Probable dual-specificity RNA methyltransferase RlmN (Pseudothermotoga lettingae (strain ATCC BAA-301 / DSM 14385 / NBRC 107922 / TMO) (Thermotoga lettingae)).